Here is a 575-residue protein sequence, read N- to C-terminus: Urease subunit alpha (575 aa).

The region spanning 138–575 is the Urease domain; the sequence is GAVDCHVHLI…LPMTQRYFLF (438 aa). His143, His145, and Lys226 together coordinate Ni(2+). Residue Lys226 is modified to N6-carboxylysine. Residue His228 coordinates substrate. His255 and His281 together coordinate Ni(2+). His329 serves as the catalytic Proton donor. Asp369 lines the Ni(2+) pocket.

It belongs to the metallo-dependent hydrolases superfamily. Urease alpha subunit family. Heterotrimer of UreA (gamma), UreB (beta) and UreC (alpha) subunits. Three heterotrimers associate to form the active enzyme. Requires Ni cation as cofactor. Carboxylation allows a single lysine to coordinate two nickel ions.

Its subcellular location is the cytoplasm. It carries out the reaction urea + 2 H2O + H(+) = hydrogencarbonate + 2 NH4(+). The protein operates within nitrogen metabolism; urea degradation; CO(2) and NH(3) from urea (urease route): step 1/1. The chain is Urease subunit alpha from Frankia casuarinae (strain DSM 45818 / CECT 9043 / HFP020203 / CcI3).